We begin with the raw amino-acid sequence, 159 residues long: Protein-export protein SecB (159 aa).

This sequence belongs to the SecB family. In terms of assembly, homotetramer, a dimer of dimers. One homotetramer interacts with 1 SecA dimer.

The protein resides in the cytoplasm. One of the proteins required for the normal export of preproteins out of the cell cytoplasm. It is a molecular chaperone that binds to a subset of precursor proteins, maintaining them in a translocation-competent state. It also specifically binds to its receptor SecA. The chain is Protein-export protein SecB from Nitrobacter winogradskyi (strain ATCC 25391 / DSM 10237 / CIP 104748 / NCIMB 11846 / Nb-255).